A 122-amino-acid chain; its full sequence is Large ribosomal subunit protein uL14 (122 aa).

It belongs to the universal ribosomal protein uL14 family. Part of the 50S ribosomal subunit. Forms a cluster with proteins L3 and L19. In the 70S ribosome, L14 and L19 interact and together make contacts with the 16S rRNA in bridges B5 and B8.

Binds to 23S rRNA. Forms part of two intersubunit bridges in the 70S ribosome. This Mycolicibacterium gilvum (strain PYR-GCK) (Mycobacterium gilvum (strain PYR-GCK)) protein is Large ribosomal subunit protein uL14.